The sequence spans 466 residues: Serine/threonine-protein kinase SSN3 (466 aa).

The Protein kinase domain maps to 32 to 396; that stretch reads YKILGFISSG…ARDALRHPWF (365 aa). 38 to 46 contributes to the ATP binding site; it reads ISSGTYGRV. Positions 58–105 are disordered; it reads ASAKSALPSSTRAALSLPKDKLPSPSFTEDSDPLNNPEMCMRPGDRPA. K114 is an ATP binding site. D216 serves as the catalytic Proton acceptor. Residues 421–466 form a disordered region; that stretch reads THEDNGDAKMGSLPQSMAGGRLPSSSNFRPASGNIVQPAARKKARI.

This sequence belongs to the protein kinase superfamily. CMGC Ser/Thr protein kinase family. CDC2/CDKX subfamily. In terms of assembly, component of the SRB8-11 complex, a regulatory module of the Mediator complex. Mg(2+) serves as cofactor.

It is found in the nucleus. The catalysed reaction is L-seryl-[protein] + ATP = O-phospho-L-seryl-[protein] + ADP + H(+). The enzyme catalyses L-threonyl-[protein] + ATP = O-phospho-L-threonyl-[protein] + ADP + H(+). It catalyses the reaction [DNA-directed RNA polymerase] + ATP = phospho-[DNA-directed RNA polymerase] + ADP + H(+). In terms of biological role, component of the SRB8-11 complex. The SRB8-11 complex is a regulatory module of the Mediator complex which is itself involved in regulation of basal and activated RNA polymerase II-dependent transcription. The SRB8-11 complex may be involved in the transcriptional repression of a subset of genes regulated by Mediator. It may inhibit the association of the Mediator complex with RNA polymerase II to form the holoenzyme complex. The SRB8-11 complex phosphorylates the C-terminal domain (CTD) of the largest subunit of RNA polymerase II. This Cryptococcus neoformans var. neoformans serotype D (strain B-3501A) (Filobasidiella neoformans) protein is Serine/threonine-protein kinase SSN3 (SSN3).